Consider the following 229-residue polypeptide: MYDISGWKHVFKLDPNKELSDEHLEMICESGTDAVIVGGSDGVTIDNVLHMLVSIRRYAVPCVLEVSDVEAITPGFDFYYIPSVLNSRKVEWVTGVHHEALKEFGDIMDWDEIFMEGYCVLNPEAKVAQLTDAKCDLTEDDVIAYARLADKLLHLPIFYLEYSGTYGEVELVKNVKAELKQAQLYYGGGISNAEQAKEMAQYADTVVVGNIIYDDIKSALKTVKAVKGE.

Lysine 12 serves as a coordination point for sn-glycerol 1-phosphate. Mg(2+) contacts are provided by aspartate 14 and serine 40. Sn-glycerol 1-phosphate is bound by residues 159-164 (YLEYSG), glycine 189, and 209-210 (GN).

Belongs to the GGGP/HepGP synthase family. Group I subfamily. Homodimer. Requires Mg(2+) as cofactor.

It catalyses the reaction sn-glycerol 1-phosphate + all-trans-heptaprenyl diphosphate = 3-heptaprenyl-sn-glycero-1-phosphate + diphosphate. The protein operates within membrane lipid metabolism; glycerophospholipid metabolism. Prenyltransferase that catalyzes in vivo the transfer of the heptaprenyl moiety of heptaprenyl pyrophosphate (HepPP; 35 carbon atoms) to the C3 hydroxyl of sn-glycerol-1-phosphate (G1P), producing heptaprenylglyceryl phosphate (HepGP). This reaction is an ether-bond-formation step in the biosynthesis of archaea-type G1P-based membrane lipids found in Bacillales. The polypeptide is Heptaprenylglyceryl phosphate synthase (Bacillus cereus (strain G9842)).